Here is a 196-residue protein sequence, read N- to C-terminus: Somatotropin (196 aa).

Positions 1 to 18 are cleaved as a signal peptide; sequence MEKVVLLLSVLSLGVVCP. Gln-19 carries the pyrrolidone carboxylic acid modification. Position 35 (His-35) interacts with Zn(2+). The cysteines at positions 69 and 169 are disulfide-linked. Glu-178 is a Zn(2+) binding site. The cysteines at positions 186 and 194 are disulfide-linked.

This sequence belongs to the somatotropin/prolactin family.

It localises to the secreted. In terms of biological role, growth hormone plays an important role in growth control and is involved in the regulation of several anabolic processes. Implicated as an osmoregulatory substance important for seawater adaptation. The chain is Somatotropin (gh) from Siganus guttatus (Orange-spotted spinefoot).